A 151-amino-acid chain; its full sequence is Pyruvoyl-dependent arginine decarboxylase (151 aa).

Position 42 is a pyruvic acid (Ser) (serine 42).

The protein belongs to the PdaD family. Requires pyruvate as cofactor.

The catalysed reaction is L-arginine + H(+) = agmatine + CO2. In Methanothermobacter thermautotrophicus (strain ATCC 29096 / DSM 1053 / JCM 10044 / NBRC 100330 / Delta H) (Methanobacterium thermoautotrophicum), this protein is Pyruvoyl-dependent arginine decarboxylase.